Consider the following 179-residue polypeptide: Ribosomal RNA small subunit methyltransferase G (179 aa).

Residues Gly-54, Phe-59, 105 to 106 (IE), and Arg-121 each bind S-adenosyl-L-methionine.

It belongs to the methyltransferase superfamily. RNA methyltransferase RsmG family.

It is found in the cytoplasm. The catalysed reaction is guanosine(527) in 16S rRNA + S-adenosyl-L-methionine = N(7)-methylguanosine(527) in 16S rRNA + S-adenosyl-L-homocysteine. Functionally, specifically methylates the N7 position of guanine in position 527 of 16S rRNA. The protein is Ribosomal RNA small subunit methyltransferase G of Helicobacter bizzozeronii.